Reading from the N-terminus, the 404-residue chain is Probable eukaryotic initiation factor 4A (404 aa).

The tract at residues 1–28 is disordered; sequence MAQQGKVEPQDQDSFLDDQPGIRPIPSF. The Q motif motif lies at 26–54; sequence PSFDDMPLHQNLLRGIYSHGFEKPSSIQQ. The Helicase ATP-binding domain occupies 57 to 231; that stretch reads IVPFTRGGDI…KKFMRDPTRI (175 aa). Residue 70-77 coordinates ATP; the sequence is AQSGTGKT. Residues 179-182 carry the DEAD box motif; it reads DEAD. The region spanning 242-402 is the Helicase C-terminal domain; it reads GIKQYFIAVE…ELPVDFAAYL (161 aa).

Belongs to the DEAD box helicase family. eIF4A subfamily. As to quaternary structure, eIF4F is a multi-subunit complex, the composition of which varies with external and internal environmental conditions. It is composed of at least EIF4A, EIF4E and EIF4G.

The catalysed reaction is ATP + H2O = ADP + phosphate + H(+). Functionally, ATP-dependent RNA helicase which is a subunit of the eIF4F complex involved in cap recognition and is required for mRNA binding to ribosome. In the current model of translation initiation, eIF4A unwinds RNA secondary structures in the 5'-UTR of mRNAs which is necessary to allow efficient binding of the small ribosomal subunit, and subsequent scanning for the initiator codon. The chain is Probable eukaryotic initiation factor 4A from Trypanosoma cruzi (strain CL Brener).